We begin with the raw amino-acid sequence, 219 residues long: MSMGLEITGTSLAVLGWLCTIVCCALPMWRVSAFIGSSIITAQITWEGLWMNCVVQSTGQMQCKMYDSLLALPQDLQAARALIVVSILLAAFGLLVALVGAQCTNCVQDETAKAKITIVAGVLFLLAALLTLVPVSWSANTIIRDFYNPLVPEAQKREMGAGLYVGWAAAALQLLGGALLCCSCPPRDKYAPTKILYSAPRSTGPGTGTGTAYDRKDYV.

At 1 to 8 (MSMGLEIT) the chain is on the cytoplasmic side. A helical membrane pass occupies residues 9-29 (GTSLAVLGWLCTIVCCALPMW). The Extracellular segment spans residues 30 to 80 (RVSAFIGSSIITAQITWEGLWMNCVVQSTGQMQCKMYDSLLALPQDLQAAR). A helical transmembrane segment spans residues 81-101 (ALIVVSILLAAFGLLVALVGA). Residues 102–115 (QCTNCVQDETAKAK) lie on the Cytoplasmic side of the membrane. A helical transmembrane segment spans residues 116-136 (ITIVAGVLFLLAALLTLVPVS). Residues 137-159 (WSANTIIRDFYNPLVPEAQKREM) lie on the Extracellular side of the membrane. The chain crosses the membrane as a helical span at residues 160-180 (GAGLYVGWAAAALQLLGGALL). Topologically, residues 181–219 (CCSCPPRDKYAPTKILYSAPRSTGPGTGTGTAYDRKDYV) are cytoplasmic. Tyr-197 bears the Phosphotyrosine mark. Residue Ser-198 is modified to Phosphoserine. The segment at 218-219 (YV) is interactions with TJP1, TJP2 and TJP3.

Belongs to the claudin family. As to quaternary structure, can form homo- and heteropolymers with other CLDN. Homopolymers interact with CLDN1 and CLDN2 homopolymers. Interacts in cis (within the same plasma membrane) with CLDN19. Directly interacts with TJP1/ZO-1, TJP2/ZO-2 and TJP3/ZO-3. (Microbial infection) Interacts with Clostridium perfringens enterotoxin CPE; the interaction may disrupt claudin assembly in tight junctions. Expressed in the lung. Expressed at high levels in the liver and at lower levels, in kidney and testis.

The protein resides in the cell junction. Its subcellular location is the tight junction. It is found in the cell membrane. Plays a major role in tight junction-specific obliteration of the intercellular space, through calcium-independent cell-adhesion activity. This chain is Claudin-3 (Cldn3), found in Mus musculus (Mouse).